We begin with the raw amino-acid sequence, 435 residues long: Methylenetetrahydrofolate--tRNA-(uracil-5-)-methyltransferase TrmFO (435 aa).

Residue 9-14 (GGGLAG) participates in FAD binding.

This sequence belongs to the MnmG family. TrmFO subfamily. The cofactor is FAD.

The protein localises to the cytoplasm. The enzyme catalyses uridine(54) in tRNA + (6R)-5,10-methylene-5,6,7,8-tetrahydrofolate + NADH + H(+) = 5-methyluridine(54) in tRNA + (6S)-5,6,7,8-tetrahydrofolate + NAD(+). It carries out the reaction uridine(54) in tRNA + (6R)-5,10-methylene-5,6,7,8-tetrahydrofolate + NADPH + H(+) = 5-methyluridine(54) in tRNA + (6S)-5,6,7,8-tetrahydrofolate + NADP(+). Functionally, catalyzes the folate-dependent formation of 5-methyl-uridine at position 54 (M-5-U54) in all tRNAs. This Citrifermentans bemidjiense (strain ATCC BAA-1014 / DSM 16622 / JCM 12645 / Bem) (Geobacter bemidjiensis) protein is Methylenetetrahydrofolate--tRNA-(uracil-5-)-methyltransferase TrmFO.